An 829-amino-acid chain; its full sequence is Cadherin-3 (829 aa).

The first 24 residues, 1 to 24, serve as a signal peptide directing secretion; that stretch reads MGLPRGPLASLLLLQVCWLQCAAS. A propeptide spanning residues 25–107 is cleaved from the precursor; it reads EPCRAVFREA…SKRILRRHKR (83 aa). Cadherin domains lie at 108–215, 216–328, 329–440, 441–546, and 547–650; these read DWVV…KPKF, TQDT…APMF, DPQK…APVF, VPPS…DHGP, and VPEP…CPGP. Over 108–654 the chain is Extracellular; it reads DWVVAPISVP…ETCPGPWKGG (547 aa). An N-linked (GlcNAc...) asparagine glycan is attached at Asn200. N-linked (GlcNAc...) asparagine glycosylation occurs at Asn566. A helical transmembrane segment spans residues 655–677; the sequence is FILPVLGAVLALLFLLLVLLLLV. Residues 678–829 are Cytoplasmic-facing; the sequence is RKKRKIKEPL…ADMYGGGEDD (152 aa).

As to quaternary structure, interacts with CDCP1 and CTNNB1. Expressed in some normal epithelial tissues and in some carcinoma cell lines.

It is found in the cell membrane. Functionally, cadherins are calcium-dependent cell adhesion proteins. They preferentially interact with themselves in a homophilic manner in connecting cells; cadherins may thus contribute to the sorting of heterogeneous cell types. This chain is Cadherin-3 (CDH3), found in Homo sapiens (Human).